A 486-amino-acid polypeptide reads, in one-letter code: MQIYNTLARAKEEFIPRDKGHVSMYVCGPTTYNFIHLGNARPLVFFDTVRRYFLYKGYKVDYVQNFTDVDDKIINRAAEEKIDPLELAQKYIQEFFVDADALNVMRADTHPKVSEHIEEIIDLIKRLEDQGHAYVVDGDVYFAVRSFAEYGKLSGRSLEDMQAGARVEVDPRKKDPMDFALWKAAKPGEPSWDSPWGSGRPGWHIECSAMAEKYLGNGFDIHGGGFDLIFPHHENEIAQSEAACKAPFARYWMHNGFITINQEKMSKSLGNFFLVREILAKFPPDVVRWYLLSTHYRSPLDFDDEKLVMSGKGLERIKTALRLLYEAMDLPVYEGEDIQGAENFEETLQRIRLEFEKAMDDDFNTALAISYFFDLAKEVNIYVGKLNSKVTLEMRKILDQAHTLIKDFNRVLGILKEDKMTGKLLIEMAGADDTLTEGLVQLIIKIRQEARSKKDWSTADAIRDGLKELGVVLEDTPQGVRWKKQG.

Position 27 (C27) interacts with Zn(2+). Positions 29–39 (PTTYNFIHLGN) match the 'HIGH' region motif. Residues C207, H232, and E236 each coordinate Zn(2+). Positions 264–268 (KMSKS) match the 'KMSKS' region motif. K267 is a binding site for ATP.

This sequence belongs to the class-I aminoacyl-tRNA synthetase family. In terms of assembly, monomer. It depends on Zn(2+) as a cofactor.

It is found in the cytoplasm. The catalysed reaction is tRNA(Cys) + L-cysteine + ATP = L-cysteinyl-tRNA(Cys) + AMP + diphosphate. The chain is Cysteine--tRNA ligase from Desulforamulus reducens (strain ATCC BAA-1160 / DSM 100696 / MI-1) (Desulfotomaculum reducens).